Reading from the N-terminus, the 276-residue chain is Phosphonoacetaldehyde hydrolase (276 aa).

Aspartate 19 acts as the Nucleophile in catalysis. The Mg(2+) site is built by aspartate 19 and alanine 21. Lysine 60 serves as the catalytic Schiff-base intermediate with substrate. Aspartate 193 contributes to the Mg(2+) binding site.

The protein belongs to the HAD-like hydrolase superfamily. PhnX family. Homodimer. The cofactor is Mg(2+).

The catalysed reaction is phosphonoacetaldehyde + H2O = acetaldehyde + phosphate + H(+). Its function is as follows. Involved in phosphonate degradation. The protein is Phosphonoacetaldehyde hydrolase of Bordetella bronchiseptica (strain ATCC BAA-588 / NCTC 13252 / RB50) (Alcaligenes bronchisepticus).